A 211-amino-acid chain; its full sequence is Urease accessory protein UreG (211 aa).

16–23 (GPVGSGKT) serves as a coordination point for GTP.

Belongs to the SIMIBI class G3E GTPase family. UreG subfamily. In terms of assembly, homodimer. UreD, UreF and UreG form a complex that acts as a GTP-hydrolysis-dependent molecular chaperone, activating the urease apoprotein by helping to assemble the nickel containing metallocenter of UreC. The UreE protein probably delivers the nickel.

The protein localises to the cytoplasm. Facilitates the functional incorporation of the urease nickel metallocenter. This process requires GTP hydrolysis, probably effectuated by UreG. The polypeptide is Urease accessory protein UreG (Janthinobacterium sp. (strain Marseille) (Minibacterium massiliensis)).